Here is a 101-residue protein sequence, read N- to C-terminus: uncharacterized protein (101 aa).

Basic and acidic residues predominate over residues 1 to 11; sequence MSDEGYRELVE. The disordered stretch occupies residues 1–26; it reads MSDEGYRELVESKSAPTTPGPWSPDR.

This is an uncharacterized protein from Torque teno canis virus (isolate Cf-TTV10).